Consider the following 155-residue polypeptide: cAMP-dependent protein kinase type II-alpha regulatory subunit (155 aa).

The disordered stretch occupies residues 1-34 (SGSQDLEPSSGLVTDAIADSESEDDEDLDVPIPS). A dimerization and phosphorylation region spans residues 1–81 (SGSQDLEPSS…LQEACKDILL (81 aa)). Acidic residues predominate over residues 18–29 (ADSESEDDEDLD). Ser-20 and Ser-22 each carry phosphoserine. Ser-41 bears the Phosphoserine; by PKA mark. Residues 82–155 (FKNL…ALMY) and Glu-150 each bind 3',5'-cyclic AMP.

It belongs to the cAMP-dependent kinase regulatory chain family. In terms of assembly, the inactive form of the enzyme is composed of two regulatory chains and two catalytic chains. Activation by cAMP produces two active catalytic monomers and a regulatory dimer that binds four cAMP molecules. Interacts with AKAP4 and CBFA2T3. Interacts with the phosphorylated form of PJA2. Interacts with MYRIP; this interaction may link PKA to components of the exocytosis machinery, thus facilitating exocytosis, including insulin release. Forms a complex composed of PRKAR2A, GSK3B and GSKIP through GSKIP interaction; facilitates PKA-induced phosphorylation and regulates GSK3B activity. Interacts with ADCY8; inhibits adenylate cyclase activity through PKA phosphorylation. In terms of processing, phosphorylated by the activated catalytic chain. In terms of tissue distribution, four types of regulatory chains are found: I-alpha, I-beta, II-alpha, and II-beta. Their expression varies among tissues and is in some cases constitutive and in others inducible.

It localises to the cytoplasm. It is found in the cell membrane. Its function is as follows. Regulatory subunit of the cAMP-dependent protein kinases involved in cAMP signaling in cells. Type II regulatory chains mediate membrane association by binding to anchoring proteins, including the MAP2 kinase. The polypeptide is cAMP-dependent protein kinase type II-alpha regulatory subunit (PRKAR2A) (Sus scrofa (Pig)).